The primary structure comprises 177 residues: NAD(P)H-quinone oxidoreductase subunit 6, chloroplastic (177 aa).

The next 5 helical transmembrane spans lie at 10 to 30 (VLLVFLGSGLILGGLGVVLLT), 32 to 52 (PIYSAFSLGLVLVCISLFYIL), 61 to 81 (AQLLIYVGAVNVLIIFAVMFM), 90 to 112 (FYLWTVGDGVTSLVCTSILFSLI), and 152 to 172 (FYLPFELVSIILLVALIGAIT).

Belongs to the complex I subunit 6 family. In terms of assembly, NDH is composed of at least 16 different subunits, 5 of which are encoded in the nucleus.

It is found in the plastid. The protein resides in the chloroplast thylakoid membrane. The catalysed reaction is a plastoquinone + NADH + (n+1) H(+)(in) = a plastoquinol + NAD(+) + n H(+)(out). It carries out the reaction a plastoquinone + NADPH + (n+1) H(+)(in) = a plastoquinol + NADP(+) + n H(+)(out). Functionally, NDH shuttles electrons from NAD(P)H:plastoquinone, via FMN and iron-sulfur (Fe-S) centers, to quinones in the photosynthetic chain and possibly in a chloroplast respiratory chain. The immediate electron acceptor for the enzyme in this species is believed to be plastoquinone. Couples the redox reaction to proton translocation, and thus conserves the redox energy in a proton gradient. The sequence is that of NAD(P)H-quinone oxidoreductase subunit 6, chloroplastic (ndhG) from Acorus calamus var. americanus (American sweet flag).